A 631-amino-acid chain; its full sequence is tRNA uridine 5-carboxymethylaminomethyl modification enzyme MnmG (631 aa).

An FAD-binding site is contributed by 14–19 (GGGHAG). 274–288 (GPRYCPSIEDKIHRF) serves as a coordination point for NAD(+).

This sequence belongs to the MnmG family. In terms of assembly, homodimer. Heterotetramer of two MnmE and two MnmG subunits. Requires FAD as cofactor.

Its subcellular location is the cytoplasm. NAD-binding protein involved in the addition of a carboxymethylaminomethyl (cmnm) group at the wobble position (U34) of certain tRNAs, forming tRNA-cmnm(5)s(2)U34. The sequence is that of tRNA uridine 5-carboxymethylaminomethyl modification enzyme MnmG from Pseudomonas paraeruginosa (strain DSM 24068 / PA7) (Pseudomonas aeruginosa (strain PA7)).